Consider the following 119-residue polypeptide: Large ribosomal subunit protein uL18 (119 aa).

This sequence belongs to the universal ribosomal protein uL18 family. Part of the 50S ribosomal subunit; part of the 5S rRNA/L5/L18/L25 subcomplex. Contacts the 5S and 23S rRNAs.

Its function is as follows. This is one of the proteins that bind and probably mediate the attachment of the 5S RNA into the large ribosomal subunit, where it forms part of the central protuberance. This Cupriavidus metallidurans (strain ATCC 43123 / DSM 2839 / NBRC 102507 / CH34) (Ralstonia metallidurans) protein is Large ribosomal subunit protein uL18.